The following is a 311-amino-acid chain: Transcriptional regulatory protein MoaR1 (311 aa).

Positions L15 to I117 form a DNA-binding region, ompR/PhoB-type.

It belongs to the AfsR/DnrI/RedD regulatory family.

Functionally, acts as a positive transcriptional regulator of the molybdopterin biosynthesis moa1 locus, promoting the expression of the moaA1B1C1D1 genes. In Mycobacterium bovis (strain BCG / Pasteur 1173P2), this protein is Transcriptional regulatory protein MoaR1 (moaR1).